A 194-amino-acid chain; its full sequence is Threonylcarbamoyl-AMP synthase (194 aa).

One can recognise a YrdC-like domain in the interval 11 to 194; it reads FRNLMKIINA…GINYKIIRKG (184 aa).

Belongs to the SUA5 family. TsaC subfamily.

It localises to the cytoplasm. It catalyses the reaction L-threonine + hydrogencarbonate + ATP = L-threonylcarbamoyladenylate + diphosphate + H2O. Its function is as follows. Required for the formation of a threonylcarbamoyl group on adenosine at position 37 (t(6)A37) in tRNAs that read codons beginning with adenine. Catalyzes the conversion of L-threonine, HCO(3)(-)/CO(2) and ATP to give threonylcarbamoyl-AMP (TC-AMP) as the acyladenylate intermediate, with the release of diphosphate. The sequence is that of Threonylcarbamoyl-AMP synthase from Wigglesworthia glossinidia brevipalpis.